We begin with the raw amino-acid sequence, 385 residues long: Prostacyclin receptor (385 aa).

The Extracellular segment spans residues Met1 to Gly16. 2 disulfide bridges follow: Cys5/Cys165 and Cys92/Cys170. N-linked (GlcNAc...) asparagine glycosylation is present at Asn7. Residues Pro17–Leu38 form a helical membrane-spanning segment. At Gly39 to Val51 the chain is on the cytoplasmic side. A helical transmembrane segment spans residues Leu52 to Ala76. Topologically, residues Arg77–Ala94 are extracellular. The chain crosses the membrane as a helical span at residues Phe95–Val115. The Cytoplasmic portion of the chain corresponds to Glu116–Arg134. Residues Arg135–Leu158 form a helical membrane-spanning segment. The Extracellular segment spans residues Gly159 to Gly181. Residues Cys182–Leu208 traverse the membrane as a helical segment. Residues Ser209–Val234 lie on the Cytoplasmic side of the membrane. A helical transmembrane segment spans residues Asp235 to Arg259. Residues Gly260–Gly273 lie on the Extracellular side of the membrane. A helical membrane pass occupies residues Asp274 to Leu294. Residues Phe295–Cys385 lie on the Cytoplasmic side of the membrane. Positions Ala315–Gly344 are disordered. Over residues Asp318–Ser328 the composition is skewed to polar residues. Position 382 is a cysteine methyl ester (Cys382). The S-farnesyl cysteine moiety is linked to residue Cys382. Positions Ser383–Cys385 are cleaved as a propeptide — removed in mature form.

Belongs to the G-protein coupled receptor 1 family. In terms of assembly, interacts (non-isoprenylated C-terminus) with PDZK1. Isoprenylation does not influence ligand binding but is required for efficient coupling to the effectors adenylyl cyclase and phospholipase C.

The protein resides in the cell membrane. Receptor for prostacyclin (prostaglandin I2 or PGI2). The activity of this receptor is mediated by G(s) proteins which activate adenylate cyclase. The sequence is that of Prostacyclin receptor (PTGIR) from Bos taurus (Bovine).